A 417-amino-acid polypeptide reads, in one-letter code: 3-isopropylmalate dehydratase large subunit (417 aa).

The [4Fe-4S] cluster site is built by Cys298, Cys358, and Cys361.

The protein belongs to the aconitase/IPM isomerase family. LeuC type 2 subfamily. As to quaternary structure, heterodimer of LeuC and LeuD. The cofactor is [4Fe-4S] cluster.

The catalysed reaction is (2R,3S)-3-isopropylmalate = (2S)-2-isopropylmalate. The protein operates within amino-acid biosynthesis; L-leucine biosynthesis; L-leucine from 3-methyl-2-oxobutanoate: step 2/4. Catalyzes the isomerization between 2-isopropylmalate and 3-isopropylmalate, via the formation of 2-isopropylmaleate. In Thermoanaerobacter pseudethanolicus (strain ATCC 33223 / 39E) (Clostridium thermohydrosulfuricum), this protein is 3-isopropylmalate dehydratase large subunit.